The primary structure comprises 148 residues: Calmodulin-related protein 97A (148 aa).

4 EF-hand domains span residues 7-42 (EQIAEFKDAFVQFDKEGTGKIATRELGTLMRTLGQN), 43-78 (PTEAELQDLIAEAENNNNGQLNFTEFCGIMAKQMRE), 80-115 (DTEEEMREAFKIFDRDGDGFISPAELRFVMINLGEK), and 116-148 (VTDEEIDEMIREADFDGDGMINYEEFVWMISQK). Residues Asp-20, Thr-24, Lys-26, Glu-31, Asn-58, Asn-60, Gln-62, Glu-67, Asp-93, Asp-95, Asp-97, Glu-104, Asp-129, Asp-131, Asp-133, Met-135, and Glu-140 each contribute to the Ca(2+) site.

The protein belongs to the calmodulin family.

May be involved in calcium-mediated signal transduction. The chain is Calmodulin-related protein 97A (Acam) from Drosophila melanogaster (Fruit fly).